Consider the following 300-residue polypeptide: Beta-lactamase (300 aa).

The signal sequence occupies residues 1 to 29; sequence MTMFKTTFRQTATIAVSLISLLVSPMLWA. Ser-75 (acyl-ester intermediate) is an active-site residue. 239–241 serves as a coordination point for substrate; it reads KTG.

This sequence belongs to the class-A beta-lactamase family. As to quaternary structure, monomer.

It carries out the reaction a beta-lactam + H2O = a substituted beta-amino acid. Functionally, hydrolyzes broad-spectrum beta-lactam antibiotics. Active against cephalosporins such as cefuroxime and cefotaxime. The polypeptide is Beta-lactamase (blaB) (Proteus vulgaris).